Reading from the N-terminus, the 353-residue chain is Phosphoribosylformylglycinamidine cyclo-ligase (353 aa).

It belongs to the AIR synthase family.

It localises to the cytoplasm. It catalyses the reaction 2-formamido-N(1)-(5-O-phospho-beta-D-ribosyl)acetamidine + ATP = 5-amino-1-(5-phospho-beta-D-ribosyl)imidazole + ADP + phosphate + H(+). The protein operates within purine metabolism; IMP biosynthesis via de novo pathway; 5-amino-1-(5-phospho-D-ribosyl)imidazole from N(2)-formyl-N(1)-(5-phospho-D-ribosyl)glycinamide: step 2/2. The protein is Phosphoribosylformylglycinamidine cyclo-ligase of Dinoroseobacter shibae (strain DSM 16493 / NCIMB 14021 / DFL 12).